Reading from the N-terminus, the 2568-residue chain is Highly reducing polyketide synthase AN6791 (2568 aa).

Residues 11–445 (AEPIAIVGLS…GTNAHLIVES (435 aa)) form the Ketosynthase family 3 (KS3) domain. Active-site for beta-ketoacyl synthase activity residues include cysteine 200, histidine 326, and histidine 366. Positions 558-882 (VFTGQGAQWY…GSLVREVSAV (325 aa)) constitute a Malonyl-CoA:ACP transacylase (MAT) domain. An N-terminal hotdog fold region spans residues 949–1087 (HDLLGSLVLG…GLITMEPEDA (139 aa)). The region spanning 949–1258 (HDLLGSLVLG…FQSVGRSAAP (310 aa)) is the PKS/mFAS DH domain. Histidine 981 (proton acceptor; for dehydratase activity) is an active-site residue. The interval 1104–1258 (TRRFGPSDLY…FQSVGRSAAP (155 aa)) is C-terminal hotdog fold. Aspartate 1169 serves as the catalytic Proton donor; for dehydratase activity. The interval 1311 to 1620 (RACLYFIYDA…EVRDCESDEW (310 aa)) is methyltransferase (CMet) domain. The Enoyl reductase (ER) domain maps to 1857-2174 (GLLDTIAFDD…VGKHSGKVVL (318 aa)). The 179-residue stretch at 2197–2375 (ASYLLVGGAG…AVSMDLGPVK (179 aa)) folds into the Ketoreductase (KR) domain. Positions 2481–2558 (QAEKLVVEAI…ALASEVTRKS (78 aa)) constitute a Carrier domain. Serine 2518 carries the O-(pantetheine 4'-phosphoryl)serine modification.

The cofactor is pantetheine 4'-phosphate.

The protein operates within secondary metabolite biosynthesis. Highly reducing polyketide synthase; part of a cluster that mediates the biosynthesis of a yet undetermined secondary metabolite. With esterase AN6793, produces a pathway intermediate compound with molecular weight 258. The chain is Highly reducing polyketide synthase AN6791 from Emericella nidulans (strain FGSC A4 / ATCC 38163 / CBS 112.46 / NRRL 194 / M139) (Aspergillus nidulans).